The sequence spans 320 residues: Putative cyclin-D7-1 (320 aa).

The interval 1 to 46 (MDDDDDTSFNNSLDLYCDEDPFDSTPPPPPPPPEQQQQAGTTTPDD) is disordered. Residues 24-34 (STPPPPPPPPE) are compositionally biased toward pro residues. The segment covering 35-44 (QQQQAGTTTP) has biased composition (low complexity).

It belongs to the cyclin family. Cyclin D subfamily.

The protein is Putative cyclin-D7-1 (CYCD7-1) of Oryza sativa subsp. japonica (Rice).